The primary structure comprises 416 residues: UPF0761 membrane protein Mpe_A1422 (416 aa).

6 helical membrane passes run 63–83 (IALV…PMFG), 120–140 (LGTV…LTID), 159–179 (VLVY…SLTL), 198–218 (LSVL…AGLF), 234–256 (GGLF…LAQV), and 271–291 (IFLI…VIAA).

Belongs to the UPF0761 family.

The protein resides in the cell inner membrane. This is UPF0761 membrane protein Mpe_A1422 from Methylibium petroleiphilum (strain ATCC BAA-1232 / LMG 22953 / PM1).